Reading from the N-terminus, the 99-residue chain is Aspartyl/glutamyl-tRNA(Asn/Gln) amidotransferase subunit C (99 aa).

This sequence belongs to the GatC family. In terms of assembly, heterotrimer of A, B and C subunits.

The catalysed reaction is L-glutamyl-tRNA(Gln) + L-glutamine + ATP + H2O = L-glutaminyl-tRNA(Gln) + L-glutamate + ADP + phosphate + H(+). The enzyme catalyses L-aspartyl-tRNA(Asn) + L-glutamine + ATP + H2O = L-asparaginyl-tRNA(Asn) + L-glutamate + ADP + phosphate + 2 H(+). Functionally, allows the formation of correctly charged Asn-tRNA(Asn) or Gln-tRNA(Gln) through the transamidation of misacylated Asp-tRNA(Asn) or Glu-tRNA(Gln) in organisms which lack either or both of asparaginyl-tRNA or glutaminyl-tRNA synthetases. The reaction takes place in the presence of glutamine and ATP through an activated phospho-Asp-tRNA(Asn) or phospho-Glu-tRNA(Gln). This is Aspartyl/glutamyl-tRNA(Asn/Gln) amidotransferase subunit C from Rhodococcus erythropolis (strain PR4 / NBRC 100887).